Consider the following 2532-residue polypeptide: Lovastatin diketide synthase lovF (2532 aa).

A Ketosynthase family 3 (KS3) domain is found at 10–430 (PAPIAMVGMG…GANAHAIVEQ (421 aa)). Active-site for beta-ketoacyl synthase activity residues include Cys-183, His-318, and His-353. The interval 545 to 870 (VFTGQGAQWF…PYLSCLSRGK (326 aa)) is malonyl-CoA:ACP transacylase (MAT) domain. Ser-635 functions as the For malonyltransferase activity in the catalytic mechanism. The segment at 941–1078 (HDLIGLQEPL…GLVRAEMDQP (138 aa)) is N-terminal hotdog fold. Residues 941 to 1246 (HDLIGLQEPL…LEGLVFQSLG (306 aa)) are dehydratase (DH) domain. A PKS/mFAS DH domain is found at 941 to 1251 (HDLIGLQEPL…FQSLGASLGT (311 aa)). Residue His-973 is the Proton acceptor; for dehydratase activity of the active site. Residues 1075-1094 (MDQPPSSLSNQQRIDPRPWS) form a disordered region. Positions 1078–1087 (PPSSLSNQQR) are enriched in polar residues. A C-terminal hotdog fold region spans residues 1092–1251 (PWSRKTAPQE…FQSLGASLGT (160 aa)). Asp-1159 (proton donor; for dehydratase activity) is an active-site residue. Residues 1423–1607 (ELVRLCCHKN…ARDCDSHEFY (185 aa)) are methyltransferase (CMet) domain. The segment at 1825–2144 (GLLDSLHFTK…SGQHVGKIVV (320 aa)) is enoylreductase (ER) domain. A ketoreductase (KR) domain region spans residues 2168 to 2340 (SYLVAGGLGG…AVTIDLGMVQ (173 aa)). One can recognise a Carrier domain in the interval 2453–2530 (ESIAVIMEAM…KVAEVVLQRY (78 aa)). O-(pantetheine 4'-phosphoryl)serine is present on Ser-2490.

In terms of assembly, interacts with LovD. The cofactor is pantetheine 4'-phosphate.

The catalysed reaction is holo-[2-methylbutanoate polyketide synthase] + 2 malonyl-CoA + S-adenosyl-L-methionine + 2 NADPH + 3 H(+) = (S)-2-methylbutanoyl-[2-methylbutanoate polyketide synthase] + S-adenosyl-L-homocysteine + 2 CO2 + 2 NADP(+) + 2 CoA + H2O. The protein operates within polyketide biosynthesis; lovastatin biosynthesis. Its function is as follows. Lovastatin diketide synthase; part of the gene cluster that mediates the biosynthesis of lovastatin (also known as mevinolin, mevacor or monacolin K), a hypolipidemic inhibitor of (3S)-hydroxymethylglutaryl-coenzyme A (HMG-CoA) reductase (HMGR). The first step in the biosynthesis of lovastatin is the production of dihydromonacolin L acid by the lovastatin nonaketide synthase lovB and the trans-acting enoyl reductase lovC via condensation of one acetyl-CoA unit and 8 malonyl-CoA units. Dihydromonacolin L acid is released from lovB by the thioesterase lovG. Next, dihydromonacolin L acid is oxidized by the dihydromonacolin L monooxygenase lovA twice to form monacolin J acid. The 2-methylbutyrate moiety of lovastatin is synthesized by the lovastatin diketide synthase lovF via condensation of one acetyl-CoA unit and one malonyl-CoA unit. Finally, the covalent attachment of this moiety to monacolin J acid is catalyzed by the transesterase lovD to yield lovastatin. LovD has broad substrate specificity and can also convert monacolin J to simvastatin using alpha-dimethylbutanoyl-S-methyl-3-mercaptopropionate (DMB-S-MMP) as the thioester acyl donor, and can also catalyze the reverse reaction and function as hydrolase in vitro. LovD has much higher activity with LovF-bound 2-methylbutanoate than with free diketide substrates. The sequence is that of Lovastatin diketide synthase lovF from Aspergillus terreus.